Reading from the N-terminus, the 546-residue chain is CTP synthase (546 aa).

The interval 1–266 (MTTNYIFVTG…DDLVCARFGI (266 aa)) is amidoligase domain. Serine 14 contacts CTP. Residue serine 14 coordinates UTP. ATP contacts are provided by residues 15–20 (SLGKGI) and aspartate 72. Aspartate 72 and glutamate 140 together coordinate Mg(2+). CTP is bound by residues 147-149 (DIE), 187-192 (KTKPTQ), and lysine 223. UTP-binding positions include 187–192 (KTKPTQ) and lysine 223. 239–241 (KDV) serves as a coordination point for ATP. Residues 291–542 (TIGMVGKYIE…VKAAGQNARG (252 aa)) enclose the Glutamine amidotransferase type-1 domain. Position 352 (glycine 352) interacts with L-glutamine. Cysteine 379 serves as the catalytic Nucleophile; for glutamine hydrolysis. L-glutamine-binding positions include 380–383 (LGMQ), glutamate 403, and arginine 470. Catalysis depends on residues histidine 515 and glutamate 517.

It belongs to the CTP synthase family. Homotetramer.

The catalysed reaction is UTP + L-glutamine + ATP + H2O = CTP + L-glutamate + ADP + phosphate + 2 H(+). It carries out the reaction L-glutamine + H2O = L-glutamate + NH4(+). The enzyme catalyses UTP + NH4(+) + ATP = CTP + ADP + phosphate + 2 H(+). It participates in pyrimidine metabolism; CTP biosynthesis via de novo pathway; CTP from UDP: step 2/2. Allosterically activated by GTP, when glutamine is the substrate; GTP has no effect on the reaction when ammonia is the substrate. The allosteric effector GTP functions by stabilizing the protein conformation that binds the tetrahedral intermediate(s) formed during glutamine hydrolysis. Inhibited by the product CTP, via allosteric rather than competitive inhibition. In terms of biological role, catalyzes the ATP-dependent amination of UTP to CTP with either L-glutamine or ammonia as the source of nitrogen. Regulates intracellular CTP levels through interactions with the four ribonucleotide triphosphates. This is CTP synthase from Vibrio campbellii (strain ATCC BAA-1116).